The sequence spans 254 residues: Cytochrome c oxidase subunit 2 (254 aa).

Topologically, residues 1–37 (MNNILNFYPAVITTDVAENWQIGFQDPATPIMEGIIN) are mitochondrial intermembrane. The helical transmembrane segment at 38-58 (LHYDLMFFICVISVFVSWMLG) threads the bilayer. The Mitochondrial matrix segment spans residues 59-83 (RTLWHFEQNQNKIPSSLTHGTLIEM). The chain crosses the membrane as a helical span at residues 84–104 (IWTVTPAFILLIIAVPSFSLL). At 105-254 (YAMDEIISPA…VSWISNKLNE (150 aa)) the chain is on the mitochondrial intermembrane side. The Cu cation site is built by His186, Cys221, Glu223, Cys225, His229, and Met232. Glu223 contributes to the Mg(2+) binding site.

Belongs to the cytochrome c oxidase subunit 2 family. In terms of assembly, component of the cytochrome c oxidase (complex IV, CIV), a multisubunit enzyme composed of a catalytic core of 3 subunits and several supernumerary subunits. The complex exists as a monomer or a dimer and forms supercomplexes (SCs) in the inner mitochondrial membrane with ubiquinol-cytochrome c oxidoreductase (cytochrome b-c1 complex, complex III, CIII). Cu cation serves as cofactor.

The protein localises to the mitochondrion inner membrane. It carries out the reaction 4 Fe(II)-[cytochrome c] + O2 + 8 H(+)(in) = 4 Fe(III)-[cytochrome c] + 2 H2O + 4 H(+)(out). In terms of biological role, component of the cytochrome c oxidase, the last enzyme in the mitochondrial electron transport chain which drives oxidative phosphorylation. The respiratory chain contains 3 multisubunit complexes succinate dehydrogenase (complex II, CII), ubiquinol-cytochrome c oxidoreductase (cytochrome b-c1 complex, complex III, CIII) and cytochrome c oxidase (complex IV, CIV), that cooperate to transfer electrons derived from NADH and succinate to molecular oxygen, creating an electrochemical gradient over the inner membrane that drives transmembrane transport and the ATP synthase. Cytochrome c oxidase is the component of the respiratory chain that catalyzes the reduction of oxygen to water. Electrons originating from reduced cytochrome c in the intermembrane space (IMS) are transferred via the dinuclear copper A center (CU(A)) of subunit 2 and heme A of subunit 1 to the active site in subunit 1, a binuclear center (BNC) formed by heme A3 and copper B (CU(B)). The BNC reduces molecular oxygen to 2 water molecules using 4 electrons from cytochrome c in the IMS and 4 protons from the mitochondrial matrix. This chain is Cytochrome c oxidase subunit 2 (COX2), found in Chondrus crispus (Carrageen Irish moss).